Consider the following 1283-residue polypeptide: MSREDLSIAEDLNQVSKPLLKVKLLEVLGQGDFKHLKALVDNEFQPKDDPSVQQVLNLILHYAVQVAPILLIKEIVAHWVDQVGDEKSSSKSDDGIHLDLNYQDENGNTPLHLAAAQSRSDVISFLLSQKSINDCVKNKAHQQPLDMCKDLNVAQMIQLKRDDYFLETVHSLRAAMNKRDFSKLDSIWKNPRNLNLLDINGIDPETGTTLLYEYSQKKDIEMCQWLLKHGAEATVKDGKGRSPLDLVKNIKLPAKPSNNVTPEIKLKNLLEKNLREQAIVHEDVASSKPPTYKGFLKKWTNFAHGYKLRWFILSGDGNLSYYKDQSHVDRPRGTLKVSTCRLHIDSSEKLNFELLGGITGTTRWRLKGNHPIETTRWVNAIQSAIRFAKDKEILNKKKAVPPSLALKNKSPALISHSKTQGSLPEASQYYQHTLHKEVIQPSSVSLYRRPSNNLSVVSSEIQLNDNLTESGKRFVSKMIENRLDGSKTPVGVHTGSALQRVRSSNTLKSNRSMQSGSGVASPIDKVPNGANLSQSNTTTGSTASLSDNNYIDNFEGDEANSDDEEEDLGINFDRDEEYIKAQYGPYKEKLDMYEQAISIELSSLIELIEQEEPSPEVWLTIKKSLINTSTIFGKLKDLTYKRDKRLVDMVSKQGDVNNVWVQSVKELEMELSNKTERLASIDKERRGLKKILHKKLLESHATAGNKESLENDKEQESDTTASTLGQIAKFISATKEEDEASDADEFYDAAELVDEVTELTEAHPEISTAAAPKHAPPPVPNETDNDSQYVQDEKSKIESNVEKTSQKFEKQNNLVTEDEPKTDQSLKNFKAEDKESQVKEKTKEIASSVIGEKTIVAVTTVQKRKEEYLLKEGSYLGYEDGIRKRLSMDKDDRPKISLWAVLKSMVGKDMTRMTLPVTFNEPTSLLQRVAEDLEYSELLDQAATFEDSTLRTLYVAAFTASSYASTTKRVAKPFNPLLGETFEYSRPDKQYRFFTEQVSHHPPISATWTESPRWDFWGESFVDTKFNGRSFNVKHLGLWHIKLRPNDNEKEELYTWKKPNNTVIGILIGNPQVDNHGEVNVVNHTTGDHCKLYFKARGWRSSGAYEITGEVYNKKKQKVWILGGHWNEAIFAKKVVKDGDLSLEKTRTAASAGNGPTDDGTKFLIWKANDRPEEPFNLTPFAITLNAPQPHLLPWLPPTDTRLRPDQRAMEDGRYDEAGDEKFRVEEKQRAARRKREENNLEYHPQWFVRDTHPITKAKYWRYTGKYWVKRRDHDLKDCGDIF.

Serine 2 carries the N-acetylserine modification. At serine 7 the chain carries Phosphoserine. ANK repeat units follow at residues 106–134 and 206–235; these read NGNT…SIND and TGTT…EATV. A PH domain is found at 289 to 386; it reads PPTYKGFLKK…WVNAIQSAIR (98 aa). 7 positions are modified to phosphoserine: serine 422, serine 445, serine 451, serine 455, serine 458, serine 459, and serine 486. Threonine 488 bears the Phosphothreonine mark. Composition is skewed to polar residues over residues 504–518 and 530–551; these read SNTL…SGSG and ANLS…NNYI. Disordered regions lie at residues 504 to 571 and 702 to 721; these read SNTL…LGIN and TAGN…DTTA. Serine 512 and serine 515 each carry phosphoserine. Residues 554–568 are compositionally biased toward acidic residues; the sequence is FEGDEANSDDEEEDL. A compositionally biased stretch (basic and acidic residues) spans 707-716; the sequence is ESLENDKEQE. Serine 717 bears the Phosphoserine mark. The short motif at 745 to 751 is the FFAT element; that stretch reads EFYDAAE. A disordered region spans residues 767–834; the sequence is STAAAPKHAP…SLKNFKAEDK (68 aa). Phosphothreonine is present on threonine 783. At serine 787 the chain carries Phosphoserine. Composition is skewed to basic and acidic residues over residues 791 to 810 and 818 to 834; these read QDEK…KFEK and DEPK…AEDK. 2 positions are modified to phosphoserine: serine 825 and serine 1151. The segment at 897 to 1268 is OSBP-related domain (ORD); sequence SLWAVLKSMV…KYWRYTGKYW (372 aa).

This sequence belongs to the OSBP family. Interacts with SCS2.

It localises to the cell membrane. The protein localises to the endoplasmic reticulum membrane. Functionally, lipid transport protein (LTP) involved in non-vesicular transfer of lipids between membranes. Functions in phosphoinositide-coupled directional transport of various lipids by carrying the lipid molecule in a hydrophobic pocket and transferring it between membranes through the cytosol. Involved in maintenance of intracellular sterol distribution and homeostasis. Binds and transports sterol. Plays a role in the positive regulation of vesicular transport of ceramide from the ER to the Golgi, negatively regulating COPII-mediated ER export of cargos. This is Oxysterol-binding protein homolog 2 from Saccharomyces cerevisiae (strain ATCC 204508 / S288c) (Baker's yeast).